We begin with the raw amino-acid sequence, 112 residues long: Iron-sulfur cluster assembly protein CyaY (112 aa).

This sequence belongs to the frataxin family.

In terms of biological role, involved in iron-sulfur (Fe-S) cluster assembly. May act as a regulator of Fe-S biogenesis. In Delftia acidovorans (strain DSM 14801 / SPH-1), this protein is Iron-sulfur cluster assembly protein CyaY.